Here is a 355-residue protein sequence, read N- to C-terminus: Probable dual-specificity RNA methyltransferase RlmN (355 aa).

The Proton acceptor role is filled by glutamate 89. Residues 95–322 (YENRKTVCLS…KRLGVPTSIR (228 aa)) enclose the Radical SAM core domain. An intrachain disulfide couples cysteine 102 to cysteine 333. [4Fe-4S] cluster-binding residues include cysteine 109, cysteine 113, and cysteine 116. S-adenosyl-L-methionine is bound by residues 159–160 (GE), serine 191, 214–216 (SLH), and asparagine 290. Cysteine 333 functions as the S-methylcysteine intermediate in the catalytic mechanism.

The protein belongs to the radical SAM superfamily. RlmN family. The cofactor is [4Fe-4S] cluster.

It is found in the cytoplasm. The enzyme catalyses adenosine(2503) in 23S rRNA + 2 reduced [2Fe-2S]-[ferredoxin] + 2 S-adenosyl-L-methionine = 2-methyladenosine(2503) in 23S rRNA + 5'-deoxyadenosine + L-methionine + 2 oxidized [2Fe-2S]-[ferredoxin] + S-adenosyl-L-homocysteine. It carries out the reaction adenosine(37) in tRNA + 2 reduced [2Fe-2S]-[ferredoxin] + 2 S-adenosyl-L-methionine = 2-methyladenosine(37) in tRNA + 5'-deoxyadenosine + L-methionine + 2 oxidized [2Fe-2S]-[ferredoxin] + S-adenosyl-L-homocysteine. Specifically methylates position 2 of adenine 2503 in 23S rRNA and position 2 of adenine 37 in tRNAs. This is Probable dual-specificity RNA methyltransferase RlmN from Thermus thermophilus (strain ATCC BAA-163 / DSM 7039 / HB27).